Consider the following 1179-residue polypeptide: Serine/threonine-protein kinase pakG (1179 aa).

A coiled-coil region spans residues 12–53; sequence SKTNEDIELIKQKLKEDRELLEKERAQFEEERKIIFESLNKV. Residues 111–124 form the CRIB domain; the sequence is IGTPFNVQHKVHVD. Positions 139–390 constitute a Protein kinase domain; sequence FLIDCILGTG…AIELLTHPFL (252 aa). ATP is bound by residues 145–153 and K168; that span reads LGTGSYGTV. D257 (proton acceptor) is an active-site residue. Disordered regions lie at residues 414–469, 589–631, 705–1086, and 1121–1179; these read KKKK…SSLD, IGNS…NNNN, SSSS…PITL, and TEIN…SPKK. The stretch at 621–668 forms a coiled coil; it reads NNNNNNNNNNNEFLINQIKKELILDFNENMKQYINQQLTNLKEEMLKE. 2 stretches are compositionally biased toward low complexity: residues 705 to 723 and 743 to 761; these read SSSS…SNSS and LPPS…TSSP. Pro residues predominate over residues 762-776; it reads SPSPSPSPSPSPSSP. Low complexity-rich tracts occupy residues 777-788 and 812-833; these read LPSSSTSTVNTP and NNNN…NNNN. Over residues 834-857 the composition is skewed to polar residues; it reads VIQSPKLNNRPLSPTTPTKQFNNR. The span at 864–891 shows a compositional bias: low complexity; sequence FNNRPPSPSKFNNRPPSPSNRPLSPKNS. Polar residues predominate over residues 892–946; the sequence is YNSLEKSNNGSISNNRPLSPKNSLEKSTTQNNTSSEDISTTTVTVTSEQGGTPIT. The span at 954–963 shows a compositional bias: pro residues; it reads RPKPSPPPIP. 3 stretches are compositionally biased toward low complexity: residues 964–997, 1024–1046, and 1053–1077; these read MNKS…TIAA, TTIT…SPNS, and ITTS…SSSN. Residues 1121-1135 are compositionally biased toward polar residues; sequence TEINLPSSSPSTPQK. Over residues 1137–1158 the composition is skewed to low complexity; the sequence is NTPSSIPTTPTTPTTNGGSVSS.

It belongs to the protein kinase superfamily. STE Ser/Thr protein kinase family. STE20 subfamily. It depends on Mg(2+) as a cofactor.

It catalyses the reaction L-seryl-[protein] + ATP = O-phospho-L-seryl-[protein] + ADP + H(+). It carries out the reaction L-threonyl-[protein] + ATP = O-phospho-L-threonyl-[protein] + ADP + H(+). This Dictyostelium discoideum (Social amoeba) protein is Serine/threonine-protein kinase pakG.